Reading from the N-terminus, the 276-residue chain is MIILIYLFVLVWEEAQGWGFKNGIFHNSIWLEQAAGVYHREARSGKYKLTYAEAKAVCEFEGGRLATYKQLEAARKIGFHVCAAGWMAKGRVGYPIVKPGSNCGFGKTGIIDYGIRLNRSERWDAYCYNPHAKECGGVFTDPKRIFKSPGFPNEYDDNQICYWHIRLKYGQRIHLSFLNFDLEYDPGCLADYVEIYDSYDDVHGFVGRYCGDELPEDIISTGNVMTLKFLSDASVTAGGFQIKYVTVDPASKSSQGKNTSTVSGNKNFLAGRFSHL.

A signal peptide spans 1–17 (MIILIYLFVLVWEEAQG). The 94-residue stretch at 36–129 (GVYHREARSG…SERWDAYCYN (94 aa)) folds into the Link domain. Disulfide bonds link Cys58–Cys127, Cys82–Cys103, and Cys135–Cys161. Asn118 carries N-linked (GlcNAc...) asparagine glycosylation. Positions 135 to 247 (CGGVFTDPKR…GGFQIKYVTV (113 aa)) constitute a CUB domain. Residues Glu183, Asp191, Asp232, Ser234, and Val235 each contribute to the Ca(2+) site. The cysteines at positions 188 and 210 are disulfide-linked. Asn258 is a glycosylation site (N-linked (GlcNAc...) asparagine).

As to quaternary structure, interacts (via Link domain) with inter-alpha-inhibitor (I-alpha-I) component bikunin. Interacts with ITIH2/HC2; this interaction is required for transesterification of the HC to hyaluronan. Interacts (via Link and CUB domains) with ITIH1. Chondroitin sulfate may be required for the stability of the complex. Interacts (via Link domain) with various C-X-C and C-C chemokines including PF4, CXCL8, CXCL11, CXCL12, CCL2, CCL7, CCL19, CCL21, and CCL27; this interaction interferes with chemokine binding to glycosaminoglycans. Interacts (primarily via Link domain) with BMP2; this interaction is inhibited by hyaluronan. Interacts (via both Link and CUB domains) with TNFSF11. Interacts (via CUB domain) with FN1 (via type III repeats 9-14); this interaction enhances fibronectin fibril assembly. TNFAIP6 may act as a bridging molecule between FN1 and THBS1. Vascular smooth muscle cells.

The protein localises to the secreted. Its function is as follows. Major regulator of extracellular matrix organization during tissue remodeling. Catalyzes the transfer of a heavy chain (HC) from inter-alpha-inhibitor (I-alpha-I) complex to hyaluronan. Cleaves the ester bond between the C-terminus of the HC and GalNAc residue of the chondroitin sulfate chain in I-alpha-I complex followed by transesterification of the HC to hyaluronan. In the process, potentiates the antiprotease function of I-alpha-I complex through release of free bikunin. Acts as a catalyst in the formation of hyaluronan-HC oligomers and hyaluronan-rich matrix surrounding the cumulus cell-oocyte complex, a necessary step for oocyte fertilization. Assembles hyaluronan in pericellular matrices that serve as platforms for receptor clustering and signaling. Enables binding of hyaluronan deposited on the surface of macrophages to LYVE1 on lymphatic endothelium and facilitates macrophage extravasation. Alters hyaluronan binding to functionally latent CD44 on vascular endothelium, switching CD44 into an active state that supports leukocyte rolling. Modulates the interaction of chemokines with extracellular matrix components and proteoglycans on endothelial cell surface, likely preventing chemokine gradient formation. In a negative feedback mechanism, may limit excessive neutrophil recruitment at inflammatory sites by antagonizing the association of CXCL8 with glycosaminoglycans on vascular endothelium. Has a role in osteogenesis and bone remodeling. Inhibits BMP2-dependent differentiation of mesenchymal stem cell to osteoblasts. Protects against bone erosion during inflammation by inhibiting TNFSF11/RANKL-dependent osteoclast activation. The chain is Tumor necrosis factor-inducible gene 6 protein (TNFAIP6) from Oryctolagus cuniculus (Rabbit).